Reading from the N-terminus, the 83-residue chain is Small ribosomal subunit protein bS20 (83 aa).

This sequence belongs to the bacterial ribosomal protein bS20 family.

Functionally, binds directly to 16S ribosomal RNA. The polypeptide is Small ribosomal subunit protein bS20 (Amoebophilus asiaticus (strain 5a2)).